A 413-amino-acid polypeptide reads, in one-letter code: S-adenosylmethionine synthase (413 aa).

H15 contacts ATP. Position 17 (D17) interacts with Mg(2+). K(+) is bound at residue E43. E56 and Q100 together coordinate L-methionine. Positions 100–110 (QSPDISQGVNE) are flexible loop. ATP contacts are provided by residues 171–173 (DGK), 248–249 (KF), D257, 263–264 (RK), A280, and K284. D257 contacts L-methionine. Residue K288 participates in L-methionine binding.

The protein belongs to the AdoMet synthase family. Homotetramer; dimer of dimers. Mg(2+) serves as cofactor. Requires K(+) as cofactor.

It localises to the cytoplasm. It carries out the reaction L-methionine + ATP + H2O = S-adenosyl-L-methionine + phosphate + diphosphate. It participates in amino-acid biosynthesis; S-adenosyl-L-methionine biosynthesis; S-adenosyl-L-methionine from L-methionine: step 1/1. Functionally, catalyzes the formation of S-adenosylmethionine (AdoMet) from methionine and ATP. The overall synthetic reaction is composed of two sequential steps, AdoMet formation and the subsequent tripolyphosphate hydrolysis which occurs prior to release of AdoMet from the enzyme. The chain is S-adenosylmethionine synthase from Prochlorococcus marinus (strain MIT 9515).